The following is a 570-amino-acid chain: Carotenoid cleavage dioxygenase 8, chloroplastic (570 aa).

A chloroplast-targeting transit peptide spans methionine 1–arginine 56. Fe cation contacts are provided by histidine 254, histidine 305, histidine 372, and histidine 563.

Belongs to the carotenoid oxygenase family. Requires Fe(2+) as cofactor. As to expression, expressed in flowers, siliques, inflorescence stems, petiole and leaves, and at a much higher level in roots.

It is found in the plastid. The protein localises to the chloroplast. The catalysed reaction is 9-cis-10'-apo-beta-carotenal + 2 O2 = (2E,4E,6E)-7-hydroxy-4-methylhepta-2,4,6-trienal + (11R)-carlactone. It catalyses the reaction all-trans-10'-apo-beta-carotenal + O2 = (2E,4E,6E)-4-methylocta-2,4,6-trienedial + 13-apo-beta-carotenone. Functionally, involved in strigolactones biosynthesis by cleaving the C(27) 9-cis-10'-apo-beta-carotenal produced by CCD7. Produces the C(19) carlactone and a C(8) hydroxyaldehyde. Also shows lower activity with all-trans-10'-apo-beta-carotenal producing a C(9) dialdehyde and the C(18) 13-apo-beta-carotenone. Strigolactones are hormones that inhibit tillering and shoot branching through the MAX-dependent pathway, contribute to the regulation of shoot architectural response to phosphate-limiting conditions and function as rhizosphere signal that stimulates hyphal branching of arbuscular mycorrhizal fungi and trigger seed germination of root parasitic weeds. Also active on other carotenoid substrates like licopene or zeaxanthin. The sequence is that of Carotenoid cleavage dioxygenase 8, chloroplastic from Arabidopsis thaliana (Mouse-ear cress).